Reading from the N-terminus, the 846-residue chain is Disks large-associated protein 5 (846 aa).

Residue Ser67 is modified to Phosphoserine; by CDK1. Positions 90–120 form a coiled coil; the sequence is RKQMLQKYKEEKQLQKLKEQREKAKRGIFKV. Residues 153-284 are disordered; sequence TRSKAKDQME…TNATSGMNPD (132 aa). Basic and acidic residues-rich tracts occupy residues 156-174 and 182-194; these read KAKD…DVRA and TSEK…EKKV. Phosphoserine is present on Ser202. The segment covering 203–225 has biased composition (polar residues); that stretch reads LRMTRSATQAAKQVPRTVSSTTA. The span at 250-266 shows a compositional bias: basic and acidic residues; it reads KNVETKPDKGISCKVDS. A compositionally biased stretch (polar residues) spans 269–281; that stretch reads NTLNSQTNATSGM. Thr326 carries the phosphothreonine modification. Thr329 carries the post-translational modification Phosphothreonine; by CDK1. A Phosphothreonine modification is found at Thr338. Residue Lys347 forms a Glycyl lysine isopeptide (Lys-Gly) (interchain with G-Cter in SUMO2) linkage. Thr401 and Thr402 each carry phosphothreonine; by CDK1. Ser618 is subject to Phosphoserine; by CDK1. Position 627 is a phosphoserine; by AURKA (Ser627). Polar residues predominate over residues 628 to 671; the sequence is VSSEGPSQRLGTPKSVNKAVSQSRNEMGIPQQTTSPENAGPQNT. The disordered stretch occupies residues 628 to 674; it reads VSSEGPSQRLGTPKSVNKAVSQSRNEMGIPQQTTSPENAGPQNTKSE. Phosphoserine is present on residues Ser629 and Ser634. Position 639 is a phosphothreonine; by CDK1 (Thr639). Ser642 is modified (phosphoserine; by CDK1). At Ser662 the chain carries Phosphoserine. Ser725 and Ser757 each carry phosphoserine; by AURKA. Thr759 is subject to Phosphothreonine; by CDK1. Residues Ser774 and Ser777 each carry the phosphoserine modification. Thr784 is subject to Phosphothreonine. Residues Ser806 and Ser812 each carry the phosphoserine modification. The residue at position 830 (Ser830) is a Phosphoserine; by AURKA. At Ser839 the chain carries Phosphoserine; by CDK1.

It belongs to the SAPAP family. Interacts with CDK1. Interacts with the C-terminal proline-rich region of FBXO7. Recruited by FBXO7 to a SCF (SKP1-CUL1-F-box) protein complex in a CDK1/Cyclin B-phosphorylation dependent manner. Interacts with CDH1. Post-translationally, ubiquitinated, leading to its degradation. Decreased phosphorylation levels are associated with the differentiation of intestinal epithelial cells. Abundantly expressed in fetal liver. Expressed at lower levels in bone marrow, testis, colon, and placenta.

Its subcellular location is the nucleus. The protein resides in the cytoplasm. It localises to the cytoskeleton. It is found in the spindle. Functionally, potential cell cycle regulator that may play a role in carcinogenesis of cancer cells. Mitotic phosphoprotein regulated by the ubiquitin-proteasome pathway. Key regulator of adherens junction integrity and differentiation that may be involved in CDH1-mediated adhesion and signaling in epithelial cells. This is Disks large-associated protein 5 (DLGAP5) from Homo sapiens (Human).